The chain runs to 1099 residues: Sterol regulatory element-binding protein 2 (1099 aa).

The tract at residues 1–47 (MDASEFMDTMDPSLSELGDEFTLGDIDEMLQFVSNQVDFPDIFEDQM) is transcriptional activation (acidic). Over 1–461 (MDASEFMDTM…SCVGVMDRSR (461 aa)) the chain is Cytoplasmic. The segment at 65–107 (LTPPHTPVQTSSQTHTQTLTQAHTQTHTQTHTQTRTPPVLQPR) is disordered. Residues 71 to 100 (PVQTSSQTHTQTLTQAHTQTHTQTHTQTRT) are compositionally biased toward low complexity. A bHLH domain is found at 320–370 (ERRTTHNIIEKRYRSSINDKILELRDLVLGNDAKMHKSGVLRKAIDYIKYL). The tract at residues 370-391 (LQQVNHKLRQENLTLKMANQKN) is leucine-zipper. A helical membrane pass occupies residues 462–482 (LLLCALSFLCLSLNPLPSLLG). The Lumenal segment spans residues 483–513 (AEAPAGSPEVAGHGPTRTLFSLPAQTQSFGA). Residues 514-534 (WLWCVLPFLLVWVVSGVGVVW) traverse the membrane as a helical segment. The Cytoplasmic portion of the chain corresponds to 535-1099 (GCVRVLYLWE…LSGGTTIAAS (565 aa)).

It belongs to the SREBP family. In terms of assembly, forms a tight complex with scap, the SCAP-SREBP complex, in the endoplasmic reticulum membrane. Homodimer; efficient DNA binding of the soluble transcription factor fragment requires dimerization with another bHLH protein. In terms of processing, processed in the Golgi apparatus, releasing the protein from the membrane. At low cholesterol the SCAP-SREBP complex is recruited into COPII vesicles for export from the endoplasmic reticulum. In the Golgi, complex SREBPs are cleaved sequentially by site-1 (mbtps1, S1P) and site-2 (mbtps2, S2P) protease. The first cleavage by site-1 protease occurs within the luminal loop, the second cleavage by site-2 protease occurs within the first transmembrane domain, releasing the transcription factor from the Golgi membrane.

It localises to the endoplasmic reticulum membrane. The protein resides in the golgi apparatus membrane. The protein localises to the cytoplasmic vesicle. It is found in the COPII-coated vesicle membrane. Its subcellular location is the nucleus. Its function is as follows. Precursor of the transcription factor form (Processed sterol regulatory element-binding protein 2), which is embedded in the endoplasmic reticulum membrane. Low sterol concentrations promote processing of this form, releasing the transcription factor form that translocates into the nucleus and activates transcription of genes involved in cholesterol biosynthesis. In terms of biological role, key transcription factor that regulates expression of genes involved in cholesterol biosynthesis. Binds to the sterol regulatory element 1 (SRE-1) (5'-ATCACCCCAC-3'). Has dual sequence specificity binding to both an E-box motif (5'-ATCACGTGA-3') and to SRE-1 (5'-ATCACCCCAC-3'). Regulates transcription of genes related to cholesterol synthesis pathway. Activated by mediated cholesterol efflux, transactivates NOTCH and promotes hematopoietic stem and progenitor cell emergence. This chain is Sterol regulatory element-binding protein 2, found in Danio rerio (Zebrafish).